We begin with the raw amino-acid sequence, 305 residues long: Ribonuclease BN (305 aa).

Residues His-64, His-66, Asp-68, His-69, His-141, Asp-212, and His-270 each coordinate Zn(2+). Asp-68 acts as the Proton acceptor in catalysis.

It belongs to the RNase Z family. RNase BN subfamily. As to quaternary structure, homodimer. Zn(2+) serves as cofactor.

Functionally, zinc phosphodiesterase, which has both exoribonuclease and endoribonuclease activities. This is Ribonuclease BN from Escherichia coli O7:K1 (strain IAI39 / ExPEC).